A 269-amino-acid chain; its full sequence is Expansin-B9 (269 aa).

Residues 1-24 form the signal peptide; the sequence is MGSLANNIMVVGAVLAALVVGGSC. An N-linked (GlcNAc...) asparagine glycan is attached at asparagine 34. The Expansin-like EG45 domain occupies 63–169; the sequence is GGACGIKNVN…RRVRCKYPAG (107 aa). 3 cysteine pairs are disulfide-bonded: cysteine 66-cysteine 94, cysteine 97-cysteine 164, and cysteine 102-cysteine 108. Residues 183–264 form the Expansin-like CBD domain; sequence NYVAVLVKFV…NWRPDAVYTS (82 aa).

This sequence belongs to the expansin family. Expansin B subfamily. Expressed in anthers and pollen.

The protein localises to the secreted. It localises to the cell wall. It is found in the membrane. Functionally, may aid fertilization by loosening the cell wall of the stigma and style, thereby facilitating penetration of the pollen tube. Acts selectively on grass cell walls, which are relatively poor in pectins and xyloglucans and rich in glucuronoarabinoxylans and (1-3),(1-4)-beta-D-glucans, when compared with cell walls of other angiosperms, including other monocots. In Zea mays (Maize), this protein is Expansin-B9 (EXPB9).